A 34-amino-acid chain; its full sequence is uncharacterized protein (34 aa).

Basic and acidic residues predominate over residues 1–12 (MFSHFEVSENRP). Positions 1-21 (MFSHFEVSENRPRKQPRRKRI) are disordered.

This is an uncharacterized protein from Saccharomyces cerevisiae (strain ATCC 204508 / S288c) (Baker's yeast).